Consider the following 197-residue polypeptide: SIGLEC family-like protein 1 (197 aa).

Residues 118-138 form a helical membrane-spanning segment; that stretch reads GAIYAGIVIALLFLCLLPLIV. The interval 160–179 is disordered; that stretch reads VRASQELEMSLKPEEPGKPV. Basic and acidic residues predominate over residues 162 to 176; the sequence is ASQELEMSLKPEEPG.

Its subcellular location is the membrane. This is SIGLEC family-like protein 1 (SIGLECL1) from Homo sapiens (Human).